Here is a 213-residue protein sequence, read N- to C-terminus: Thiamine-phosphate synthase (213 aa).

4-amino-2-methyl-5-(diphosphooxymethyl)pyrimidine contacts are provided by residues 40-44 (QFREK) and Asn-75. Mg(2+)-binding residues include Asp-76 and Asp-95. 4-amino-2-methyl-5-(diphosphooxymethyl)pyrimidine is bound at residue Ser-113. 139-141 (TPS) serves as a coordination point for 2-[(2R,5Z)-2-carboxy-4-methylthiazol-5(2H)-ylidene]ethyl phosphate. Lys-142 is a binding site for 4-amino-2-methyl-5-(diphosphooxymethyl)pyrimidine. Residues Gly-171 and 191-192 (IS) contribute to the 2-[(2R,5Z)-2-carboxy-4-methylthiazol-5(2H)-ylidene]ethyl phosphate site.

The protein belongs to the thiamine-phosphate synthase family. Mg(2+) is required as a cofactor.

It carries out the reaction 2-[(2R,5Z)-2-carboxy-4-methylthiazol-5(2H)-ylidene]ethyl phosphate + 4-amino-2-methyl-5-(diphosphooxymethyl)pyrimidine + 2 H(+) = thiamine phosphate + CO2 + diphosphate. It catalyses the reaction 2-(2-carboxy-4-methylthiazol-5-yl)ethyl phosphate + 4-amino-2-methyl-5-(diphosphooxymethyl)pyrimidine + 2 H(+) = thiamine phosphate + CO2 + diphosphate. The catalysed reaction is 4-methyl-5-(2-phosphooxyethyl)-thiazole + 4-amino-2-methyl-5-(diphosphooxymethyl)pyrimidine + H(+) = thiamine phosphate + diphosphate. The protein operates within cofactor biosynthesis; thiamine diphosphate biosynthesis; thiamine phosphate from 4-amino-2-methyl-5-diphosphomethylpyrimidine and 4-methyl-5-(2-phosphoethyl)-thiazole: step 1/1. In terms of biological role, condenses 4-methyl-5-(beta-hydroxyethyl)thiazole monophosphate (THZ-P) and 2-methyl-4-amino-5-hydroxymethyl pyrimidine pyrophosphate (HMP-PP) to form thiamine monophosphate (TMP). This Staphylococcus aureus (strain bovine RF122 / ET3-1) protein is Thiamine-phosphate synthase.